A 269-amino-acid chain; its full sequence is UPF0162 protein BUsg_167 (269 aa).

The protein belongs to the UPF0162 family.

This chain is UPF0162 protein BUsg_167, found in Buchnera aphidicola subsp. Schizaphis graminum (strain Sg).